A 199-amino-acid chain; its full sequence is ATP-dependent Clp protease proteolytic subunit 2 (199 aa).

The Nucleophile role is filled by Ser98. His123 is a catalytic residue.

This sequence belongs to the peptidase S14 family. As to quaternary structure, fourteen ClpP subunits assemble into 2 heptameric rings which stack back to back to give a disk-like structure with a central cavity, resembling the structure of eukaryotic proteasomes.

The protein resides in the cytoplasm. The catalysed reaction is Hydrolysis of proteins to small peptides in the presence of ATP and magnesium. alpha-casein is the usual test substrate. In the absence of ATP, only oligopeptides shorter than five residues are hydrolyzed (such as succinyl-Leu-Tyr-|-NHMec, and Leu-Tyr-Leu-|-Tyr-Trp, in which cleavage of the -Tyr-|-Leu- and -Tyr-|-Trp bonds also occurs).. Its function is as follows. Cleaves peptides in various proteins in a process that requires ATP hydrolysis. Has a chymotrypsin-like activity. Plays a major role in the degradation of misfolded proteins. The sequence is that of ATP-dependent Clp protease proteolytic subunit 2 from Corynebacterium efficiens (strain DSM 44549 / YS-314 / AJ 12310 / JCM 11189 / NBRC 100395).